A 376-amino-acid chain; its full sequence is tRNA-specific 2-thiouridylase MnmA (376 aa).

ATP contacts are provided by residues 17–24 and M43; that span reads GMSGGVDS. Residues 103–105 form an interaction with target base in tRNA region; the sequence is NPD. The active-site Nucleophile is the C108. C108 and C205 are oxidised to a cystine. G132 provides a ligand contact to ATP. The interval 155-157 is interaction with tRNA; that stretch reads KDQ. Residue C205 is the Cysteine persulfide intermediate of the active site. The interaction with tRNA stretch occupies residues 315 to 316; the sequence is RY.

It belongs to the MnmA/TRMU family.

Its subcellular location is the cytoplasm. It carries out the reaction S-sulfanyl-L-cysteinyl-[protein] + uridine(34) in tRNA + AH2 + ATP = 2-thiouridine(34) in tRNA + L-cysteinyl-[protein] + A + AMP + diphosphate + H(+). Functionally, catalyzes the 2-thiolation of uridine at the wobble position (U34) of tRNA, leading to the formation of s(2)U34. The sequence is that of tRNA-specific 2-thiouridylase MnmA from Dichelobacter nodosus (strain VCS1703A).